Here is a 1426-residue protein sequence, read N- to C-terminus: Ferlin 2 (1426 aa).

C2 domains are found at residues 1-111 (MGKT…QIRK), 161-279 (RKAV…PRWF), 512-638 (EKSK…ESPT), 1031-1154 (SEDR…QKSM), and 1189-1318 (KAGE…TLNS). Positions 1357-1377 (SKPVGLGREPPNRDPRLTTPQ) are disordered. Residues 1366–1377 (PPNRDPRLTTPQ) show a composition bias toward basic and acidic residues. A helical transmembrane segment spans residues 1404 to 1424 (VAAVVFLSIWIFVVAFLYPSL).

Belongs to the ferlin family.

The protein resides in the membrane. It localises to the inner membrane complex. The protein localises to the cytoplasmic vesicle. It is found in the secretory vesicle. Its subcellular location is the rhoptry. Its function is as follows. Regulates rhoptry secretion. Required for completing the lytic cycle. Required for host cell invasion. Not required for microneme secretion and conoid extrusion. In Toxoplasma gondii, this protein is Ferlin 2.